A 327-amino-acid polypeptide reads, in one-letter code: Biotin synthase (327 aa).

The Radical SAM core domain occupies 51–278; it reads QTIQLSTLMS…KSYVRLSAGR (228 aa). Cys66, Cys70, and Cys73 together coordinate [4Fe-4S] cluster. Positions 110, 141, 201, and 273 each coordinate [2Fe-2S] cluster.

Belongs to the radical SAM superfamily. Biotin synthase family. Homodimer. Requires [4Fe-4S] cluster as cofactor. It depends on [2Fe-2S] cluster as a cofactor.

The enzyme catalyses (4R,5S)-dethiobiotin + (sulfur carrier)-SH + 2 reduced [2Fe-2S]-[ferredoxin] + 2 S-adenosyl-L-methionine = (sulfur carrier)-H + biotin + 2 5'-deoxyadenosine + 2 L-methionine + 2 oxidized [2Fe-2S]-[ferredoxin]. Its pathway is cofactor biosynthesis; biotin biosynthesis; biotin from 7,8-diaminononanoate: step 2/2. Its function is as follows. Catalyzes the conversion of dethiobiotin (DTB) to biotin by the insertion of a sulfur atom into dethiobiotin via a radical-based mechanism. The sequence is that of Biotin synthase from Histophilus somni (strain 2336) (Haemophilus somnus).